The sequence spans 259 residues: MANEEDFVGFGDTFKDPEGFYPPEKEPTFAEHQMLSGQTVRVRLVGSHPLYGDLLWNAGRTSATYIEEKASSLVEGKDVLEVGAAAGVPSIVSAVKGARTVVMTDYPDPDLVENMRYNASLSAAIIPSSSSLHVAGYKWGDPVEPLTAYLPEGSNSFDLLIMADVVYSYQEHPNLIKVMQKALKKSKDSVALVVFTPYQPWLLPRNQTFFPLAEQNGFQVTKIFEKVMDKVLFENDPGDELLRRTVFGYEIRWAPNQLN.

S-adenosyl-L-methionine contacts are provided by residues tryptophan 56, 83-85 (GAA), aspartate 105, tryptophan 139, and alanine 163.

Belongs to the class I-like SAM-binding methyltransferase superfamily. EFM7 family.

It localises to the cytoplasm. In terms of biological role, S-adenosyl-L-methionine-dependent protein methyltransferase that trimethylates the N-terminal glycine 'Gly-2' of elongation factor 1-alpha, before also catalyzing the mono- and dimethylation of 'Lys-3'. The protein is Protein N-terminal and lysine N-methyltransferase efm7 of Aspergillus fumigatus (strain ATCC MYA-4609 / CBS 101355 / FGSC A1100 / Af293) (Neosartorya fumigata).